Reading from the N-terminus, the 231-residue chain is NADH-ubiquinone oxidoreductase chain 4 (231 aa).

A run of 6 helical transmembrane segments spans residues 1 to 21 (PIAG…YGII), 34 to 54 (MFLP…LTCL), 62 to 84 (LIAY…QTPW), 89 to 111 (AMAL…NTTY), 128 to 148 (ILPM…AIPP), and 169 to 189 (TIIM…HMFL).

The protein belongs to the complex I subunit 4 family.

It is found in the mitochondrion membrane. The enzyme catalyses a ubiquinone + NADH + 5 H(+)(in) = a ubiquinol + NAD(+) + 4 H(+)(out). Functionally, core subunit of the mitochondrial membrane respiratory chain NADH dehydrogenase (Complex I) that is believed to belong to the minimal assembly required for catalysis. Complex I functions in the transfer of electrons from NADH to the respiratory chain. The immediate electron acceptor for the enzyme is believed to be ubiquinone. The protein is NADH-ubiquinone oxidoreductase chain 4 (MT-ND4) of Bothrops erythromelas (Caatinga lance head).